Consider the following 121-residue polypeptide: Two-component response regulator ORR13 (121 aa).

Residues 5–121 (HVLVVDDTHV…ADVPRILNYI (117 aa)) form the Response regulatory domain. A 4-aspartylphosphate modification is found at Asp55.

It belongs to the ARR family. Type-A subfamily. Post-translationally, two-component system major event consists of a His-to-Asp phosphorelay between a sensor histidine kinase (HK) and a response regulator (RR). In plants, the His-to-Asp phosphorelay involves an additional intermediate named Histidine-containing phosphotransfer protein (HPt). This multistep phosphorelay consists of a His-Asp-His-Asp sequential transfer of a phosphate group between first a His and an Asp of the HK protein, followed by the transfer to a conserved His of the HPt protein and finally the transfer to an Asp in the receiver domain of the RR protein. As to expression, expressed in flowers and panicles.

Functions as a response regulator involved in His-to-Asp phosphorelay signal transduction system. Phosphorylation of the Asp residue in the receiver domain activates the ability of the protein to promote the transcription of target genes. Type-A response regulators seem to act as negative regulators of the cytokinin signaling. The protein is Two-component response regulator ORR13 of Oryza sativa subsp. japonica (Rice).